Here is a 99-residue protein sequence, read N- to C-terminus: Integration host factor subunit alpha (99 aa).

The protein belongs to the bacterial histone-like protein family. As to quaternary structure, heterodimer of an alpha and a beta chain.

In terms of biological role, this protein is one of the two subunits of integration host factor, a specific DNA-binding protein that functions in genetic recombination as well as in transcriptional and translational control. The protein is Integration host factor subunit alpha of Pseudoalteromonas translucida (strain TAC 125).